Consider the following 269-residue polypeptide: Aquaporin-1 (269 aa).

Over 1-11 (MASEFKKKLFW) the chain is Cytoplasmic. A helical transmembrane segment spans residues 12–29 (RAVVAEFLAMTLFVFISI). Residues 30–46 (GSALGFKYPVGNNQTAV) are Extracellular-facing. The N-linked (GlcNAc...) asparagine glycan is linked to Asn-42. The helical transmembrane segment at 47–65 (QDNVKVSLAFGLSIATLAQ) threads the bilayer. The Cytoplasmic segment spans residues 66–68 (SVG). The stretch at 69 to 82 (HISGAHLNPAVTLG) is an intramembrane region. Positions 76–78 (NPA) match the NPA 1 motif. The Cytoplasmic portion of the chain corresponds to 83–90 (LLLSCQIS). A helical membrane pass occupies residues 91-109 (IFRALMYIIAQCVGAIVAT). Topologically, residues 110-133 (AILSGITSSLPGNSLGRNDLADGV) are extracellular. The helical transmembrane segment at 134 to 153 (NSGQGLGIEIIGTLQLVLCV) threads the bilayer. The Cytoplasmic segment spans residues 154–163 (LATTDRRRRD). A helical membrane pass occupies residues 164-181 (LGGSAPLAIGLSVALGHL). The Extracellular segment spans residues 182–186 (LAIDY). Residues 187–199 (TGCGINPARSFGS) lie within the membrane without spanning it. The short motif at 192–194 (NPA) is the NPA 2 element. Topologically, residues 200-206 (AVITHNF) are extracellular. Asn-205 carries an N-linked (GlcNAc...) asparagine glycan. Residues 207 to 224 (SNHWIFWVGPFIGGALAV) form a helical membrane-spanning segment. The Cytoplasmic segment spans residues 225–269 (LIYDFILAPRSSDFTDRVKVWTSGQVEEYDLDADDINSRVEMKPK). Ser-247 carries the post-translational modification Phosphoserine. Position 253 is a phosphotyrosine (Tyr-253). A Phosphoserine modification is found at Ser-262.

Belongs to the MIP/aquaporin (TC 1.A.8) family. As to quaternary structure, homotetramer; each monomer provides an independent water pore. Component of the ankyrin-1 complex in the erythrocyte, composed of ANK1, RHCE, RHAG, SLC4A1, EPB42, GYPA, GYPB and AQP1. Interacts with EPHB2; involved in endolymph production in the inner ear. Identified in a complex with STOM. Interacts (via the N-terminal) with ANK1 (via ANK 1-5 repeats). Interacts (via the C-terminal) with EPB42.

The protein resides in the cell membrane. It catalyses the reaction H2O(in) = H2O(out). The enzyme catalyses nitric oxide(out) = nitric oxide(in). The catalysed reaction is CO2(out) = CO2(in). It carries out the reaction glycerol(in) = glycerol(out). It catalyses the reaction H2O2(out) = H2O2(in). The enzyme catalyses K(+)(in) = K(+)(out). The catalysed reaction is Na(+)(in) = Na(+)(out). Functionally, forms a water channel that facilitates the transport of water across cell membranes, playing a crucial role in water homeostasis in various tissues. Could also be permeable to small solutes including hydrogen peroxide, glycerol and gases such as amonnia (NH3), nitric oxide (NO) and carbon dioxide (CO2). Recruited to the ankyrin-1 complex, a multiprotein complex of the erythrocyte membrane, it could be part of a CO2 metabolon, linking facilitated diffusion of CO2 across the membrane, anion exchange of Cl(-)/HCO3(-) and interconversion of dissolved CO2 and carbonic acid in the cytosol. In vitro, it shows non-selective gated cation channel activity and may be permeable to cations like K(+) and Na(+) in vivo. The polypeptide is Aquaporin-1 (Pongo abelii (Sumatran orangutan)).